The primary structure comprises 830 residues: Serine/threonine-protein kinase pkn2 (830 aa).

Residues 1–605 (MLAPDSLVLD…GELLRQRRRE (605 aa)) lie on the Cytoplasmic side of the membrane. The Protein kinase domain maps to 13-283 (FRVLRPLGSG…DALAAAHSAL (271 aa)). ATP contacts are provided by residues 19–27 (LGSGGMGEV) and lysine 42. Aspartate 135 functions as the Proton acceptor in the catalytic mechanism. The disordered stretch occupies residues 296–326 (VPQPGSGATPSSGTSVFGTGSASGSSSGPTG). Over residues 299 to 326 (PGSGATPSSGTSVFGTGSASGSSSGPTG) the composition is skewed to low complexity. The 116-residue stretch at 396 to 511 (TVMLTDIQGF…EPMEVIEAVE (116 aa)) folds into the Guanylate cyclase domain. Residues 606–623 (AALVAGAVVLLGAGAAWL) form a helical membrane-spanning segment. The Periplasmic segment spans residues 624-830 (SQRNDAGTRA…AIKSLKQKSD (207 aa)).

Belongs to the protein kinase superfamily. Ser/Thr protein kinase family.

The protein resides in the cell membrane. It catalyses the reaction L-seryl-[protein] + ATP = O-phospho-L-seryl-[protein] + ADP + H(+). It carries out the reaction L-threonyl-[protein] + ATP = O-phospho-L-threonyl-[protein] + ADP + H(+). Functionally, regulates the activity of endogenous beta-lactamase or related enzymes, by blocking their secretion by phosphorylation, in response to an external signal yet to be identified. The polypeptide is Serine/threonine-protein kinase pkn2 (pkn2) (Myxococcus xanthus).